A 152-amino-acid chain; its full sequence is Clitocypin-4/-3 (152 aa).

It belongs to the protease inhibitor I48 family. In terms of assembly, homodimer.

In terms of biological role, binds and inhibits cysteine proteinases. Inhibits most strongly papain and cathepsin L, more weakly bromelain and cathepsin B while it is completely ineffective against cathepsin H. The chain is Clitocypin-4/-3 (clt4) from Clitocybe nebularis (Clouded agaric).